The following is a 351-amino-acid chain: Probable V-type proton ATPase subunit d (351 aa).

The protein belongs to the V-ATPase V0D/AC39 subunit family. V-ATPase is a heteromultimeric enzyme composed of a peripheral catalytic V1 complex (components A to H) attached to an integral membrane V0 proton pore complex (components: a, c, c', c'' and d).

Its function is as follows. Subunit of the integral membrane V0 complex of vacuolar ATPase. Vacuolar ATPase is responsible for acidifying a variety of intracellular compartments in eukaryotic cells, thus providing most of the energy required for transport processes in the vacuolar system. The chain is Probable V-type proton ATPase subunit d from Oryza sativa subsp. japonica (Rice).